The following is a 574-amino-acid chain: Tyrosinase (574 aa).

His67, His95, His104, His275, His279, and His304 together coordinate Cu cation. The 2'-(S-cysteinyl)-histidine (Cys-His) cross-link spans 93-95; it reads CTH.

The protein belongs to the tyrosinase family. Requires Cu(2+) as cofactor.

The enzyme catalyses 2 L-dopa + O2 = 2 L-dopaquinone + 2 H2O. It catalyses the reaction L-tyrosine + O2 = L-dopaquinone + H2O. In terms of biological role, this is a copper-containing oxidase that functions in the formation of pigments such as melanins and other polyphenolic compounds. The polypeptide is Tyrosinase (TYR) (Podospora anserina (Pleurage anserina)).